The following is a 211-amino-acid chain: N-(5'-phosphoribosyl)anthranilate isomerase (211 aa).

The protein belongs to the TrpF family.

The catalysed reaction is N-(5-phospho-beta-D-ribosyl)anthranilate = 1-(2-carboxyphenylamino)-1-deoxy-D-ribulose 5-phosphate. The protein operates within amino-acid biosynthesis; L-tryptophan biosynthesis; L-tryptophan from chorismate: step 3/5. This is N-(5'-phosphoribosyl)anthranilate isomerase from Desulfovibrio desulfuricans (strain ATCC 27774 / DSM 6949 / MB).